The sequence spans 189 residues: uncharacterized protein (189 aa).

Residues 1–20 (MKFSTVGFLFSTILFKSAFA) form the signal peptide. One can recognise an EF-hand domain in the interval 74 to 109 (KKNEVLVDVLKKCDPSGNRRITLDEFLAFRKNGGEL). Ca(2+) contacts are provided by D87, S89, N91, R93, and E98.

The protein resides in the endoplasmic reticulum lumen. Its subcellular location is the golgi apparatus lumen. This is an uncharacterized protein from Schizosaccharomyces pombe (strain 972 / ATCC 24843) (Fission yeast).